Consider the following 103-residue polypeptide: UPF0122 protein FN1394 (103 aa).

The protein belongs to the UPF0122 family.

Its function is as follows. Might take part in the signal recognition particle (SRP) pathway. This is inferred from the conservation of its genetic proximity to ftsY/ffh. May be a regulatory protein. This chain is UPF0122 protein FN1394, found in Fusobacterium nucleatum subsp. nucleatum (strain ATCC 25586 / DSM 15643 / BCRC 10681 / CIP 101130 / JCM 8532 / KCTC 2640 / LMG 13131 / VPI 4355).